The chain runs to 614 residues: BPI fold-containing family B member 4 (614 aa).

An N-terminal signal peptide occupies residues 1–18 (MWMAWCVAALSVVAVCGT). N273 carries N-linked (GlcNAc...) asparagine glycosylation. A disulfide bridge links C295 with C332.

Belongs to the BPI/LBP/Plunc superfamily. BPI/LBP family. In terms of tissue distribution, expressed in nasal tissue.

It localises to the secreted. Its subcellular location is the cytoplasm. In terms of biological role, may have the capacity to recognize and bind specific classes of odorants. May act as a carrier molecule, transporting odorants across the mucus layer to access receptor sites. May serve as a primary defense mechanism by recognizing and removing potentially harmful odorants or pathogenic microorganisms from the mucosa or clearing excess odorant from mucus to enable new odorant stimuli to be received. This is BPI fold-containing family B member 4 (BPIFB4) from Homo sapiens (Human).